Reading from the N-terminus, the 434-residue chain is D-amino acid dehydrogenase (434 aa).

3-17 (VVILGSGVVGVASAW) contacts FAD.

It belongs to the DadA oxidoreductase family. Requires FAD as cofactor.

The enzyme catalyses a D-alpha-amino acid + A + H2O = a 2-oxocarboxylate + AH2 + NH4(+). It functions in the pathway amino-acid degradation; D-alanine degradation; NH(3) and pyruvate from D-alanine: step 1/1. In terms of biological role, oxidative deamination of D-amino acids. The sequence is that of D-amino acid dehydrogenase from Serratia proteamaculans (strain 568).